A 78-amino-acid polypeptide reads, in one-letter code: Large ribosomal subunit protein bL28 (78 aa).

The disordered stretch occupies residues 1 to 25 (MSRVCQVTGKRPTVGNNRSHARNAT).

The protein belongs to the bacterial ribosomal protein bL28 family.

This chain is Large ribosomal subunit protein bL28, found in Alteromonas mediterranea (strain DSM 17117 / CIP 110805 / LMG 28347 / Deep ecotype).